A 612-amino-acid chain; its full sequence is Zinc metalloproteinase-disintegrin-like 8 (612 aa).

A signal peptide spans 1 to 20; that stretch reads MIQVLLVTICLAVFPYQGSS. Positions 21-189 are excised as a propeptide; sequence IILGSGNVND…KKASQLNLTP (169 aa). The Peptidase M12B domain maps to 199–395; it reads KYIELVIVAD…NRPPCILNKP (197 aa). Glu-202 contacts Ca(2+). Asn-218 carries an N-linked (GlcNAc...) asparagine glycan. Residue Asp-286 coordinates Ca(2+). 3 disulfide bridges follow: Cys-310–Cys-390, Cys-350–Cys-374, and Cys-352–Cys-357. His-335 contributes to the Zn(2+) binding site. Residue Glu-336 is part of the active site. Residues His-339 and His-345 each coordinate Zn(2+). Ca(2+)-binding residues include Cys-390, Asn-393, Val-405, Asn-408, Phe-410, Glu-412, Glu-415, and Asp-418. Residues 403–489 form the Disintegrin domain; it reads PPVCGNYFVE…DCPTDDFQRN (87 aa). 14 disulfides stabilise this stretch: Cys-406/Cys-435, Cys-417/Cys-430, Cys-419/Cys-425, Cys-429/Cys-452, Cys-443/Cys-449, Cys-448/Cys-474, Cys-461/Cys-481, Cys-468/Cys-500, Cys-493/Cys-505, Cys-512/Cys-562, Cys-527/Cys-573, Cys-540/Cys-550, Cys-557/Cys-599, and Cys-593/Cys-605. Residues 467–469 carry the D/ECD-tripeptide motif; that stretch reads ECD. An N-linked (GlcNAc...) asparagine glycan is attached at Asn-502.

This sequence belongs to the venom metalloproteinase (M12B) family. P-III subfamily. Zn(2+) serves as cofactor. As to expression, expressed by the venom gland.

The protein localises to the secreted. In terms of biological role, snake venom metalloproteinase that impairs hemostasis in the envenomed animal. The sequence is that of Zinc metalloproteinase-disintegrin-like 8 from Crotalus adamanteus (Eastern diamondback rattlesnake).